Here is a 531-residue protein sequence, read N- to C-terminus: MTTKPERIIIFDTTLRDGEQCPGATLNIDEKLAIAKQLARLGVDIIEAGFAFASPGDFEAVHKIAQTVGTENGPVICSLARARHDDIKAAAEAIKPAAKGRIHTFIATSDIHLQYKLKKTRPEVIAIAEEMVAYAKSFTDDVEFSPEDAGRSDPEFLYQVLERAIAAGATTINIPDTVGYTTPSEFGAIIKGIKENVPNIDQAIISVHGHNDLGLAVANFLEAVKNGARQLECTINGIGERAGNAALEELVMAMHVRRQYFNPFLGRHPDSEEPLTNIDTKQIYKTSRLVSNLTGMLVQPNKAIVGANAFAHESGIHQDGVLKNKLTYEIMDAQLIGLTDNQIVLGKHSGRNAFRTRLKELGFELSETELNKAFVKFKEVADKKKEISDWDLEAIVNDEIQQAPDLFRVELVQVSCGSNARPTATVTLRTPDGEELTDAAIGTGPVDAVYKAINRVVNVPNQLIEFSVQSVTAGIDAIGEVTIRLRYESRVFSGHAANTDIIVASAQAYVNALNRLYASLQTQDKQTEVTA.

In terms of domain architecture, Pyruvate carboxyltransferase spans 8-284; the sequence is IIIFDTTLRD…LTNIDTKQIY (277 aa). Residues Asp-17, His-208, His-210, and Asn-244 each coordinate Mn(2+). The segment at 408 to 531 is regulatory domain; the sequence is RVELVQVSCG…TQDKQTEVTA (124 aa).

This sequence belongs to the alpha-IPM synthase/homocitrate synthase family. LeuA type 1 subfamily. Homodimer. Mn(2+) is required as a cofactor.

Its subcellular location is the cytoplasm. It catalyses the reaction 3-methyl-2-oxobutanoate + acetyl-CoA + H2O = (2S)-2-isopropylmalate + CoA + H(+). It functions in the pathway amino-acid biosynthesis; L-leucine biosynthesis; L-leucine from 3-methyl-2-oxobutanoate: step 1/4. In terms of biological role, catalyzes the condensation of the acetyl group of acetyl-CoA with 3-methyl-2-oxobutanoate (2-ketoisovalerate) to form 3-carboxy-3-hydroxy-4-methylpentanoate (2-isopropylmalate). This is 2-isopropylmalate synthase from Trichormus variabilis (strain ATCC 29413 / PCC 7937) (Anabaena variabilis).